The following is an 865-amino-acid chain: Protein translocase subunit SecA (865 aa).

Residues Q85, 103 to 107 (GEGKT), and D505 contribute to the ATP site. Residues C847, C849, C858, and H859 each contribute to the Zn(2+) site.

The protein belongs to the SecA family. In terms of assembly, monomer and homodimer. Part of the essential Sec protein translocation apparatus which comprises SecA, SecYEG and auxiliary proteins SecDF. Other proteins may also be involved. The cofactor is Zn(2+).

The protein resides in the cell membrane. It localises to the cytoplasm. It catalyses the reaction ATP + H2O + cellular proteinSide 1 = ADP + phosphate + cellular proteinSide 2.. Its function is as follows. Part of the Sec protein translocase complex. Interacts with the SecYEG preprotein conducting channel. Has a central role in coupling the hydrolysis of ATP to the transfer of proteins into and across the cell membrane, serving as an ATP-driven molecular motor driving the stepwise translocation of polypeptide chains across the membrane. The protein is Protein translocase subunit SecA of Lactococcus lactis subsp. cremoris (strain MG1363).